A 142-amino-acid polypeptide reads, in one-letter code: MAVAAVKWVMSKRTILKHLFPVQNGALYCVCHKSTYSPLPDDYNCNVELALTSDGRTIVCYHPSVDIPYEHTKPIPRPDPVHNNEETHDQVLKTRLEEKVEHLEEGPMIEQLSKMFFTTKHRWYPHGRYHRCRKNLNPPKDR.

A mitochondrion-targeting transit peptide spans 1–32 (MAVAAVKWVMSKRTILKHLFPVQNGALYCVCH).

It belongs to the mitochondrion-specific ribosomal protein mL42 family. In terms of assembly, component of the mitochondrial large ribosomal subunit (mt-LSU). Mature mammalian 55S mitochondrial ribosomes consist of a small (28S) and a large (39S) subunit. The 28S small subunit contains a 12S ribosomal RNA (12S mt-rRNA) and 30 different proteins. The 39S large subunit contains a 16S rRNA (16S mt-rRNA), a copy of mitochondrial valine transfer RNA (mt-tRNA(Val)), which plays an integral structural role, and 52 different proteins.

The protein localises to the mitochondrion. This Homo sapiens (Human) protein is Large ribosomal subunit protein mL42 (MRPL42).